The chain runs to 73 residues: UPF0154 protein MG335.1 homolog (73 aa).

The helical transmembrane segment at L6–I26 threads the bilayer.

The protein belongs to the UPF0154 family.

The protein resides in the membrane. This chain is UPF0154 protein MG335.1 homolog, found in Mycoplasma pneumoniae (strain ATCC 29342 / M129 / Subtype 1) (Mycoplasmoides pneumoniae).